Consider the following 520-residue polypeptide: Amine oxidase [flavin-containing] B (520 aa).

Ser-2 carries the N-acetylserine modification. Over 2-489 (SNKCDVIVVG…TFLERHLPSV (488 aa)) the chain is Cytoplasmic. N6-acetyllysine is present on Lys-52. Position 397 is an S-8alpha-FAD cysteine (Cys-397). Residues 490–516 (PGLLKLLGLTTILSATALGFLAHKKGL) form a helical; Anchor for type IV membrane protein membrane-spanning segment. Residues 517–520 (FVRF) are Mitochondrial intermembrane-facing.

Belongs to the flavin monoamine oxidase family. Monomer, homo- or heterodimer (containing two subunits of similar size). Each subunit contains a covalently bound flavin. Enzymatically active as monomer. FAD is required as a cofactor.

It is found in the mitochondrion outer membrane. It catalyses the reaction a secondary aliphatic amine + O2 + H2O = a primary amine + an aldehyde + H2O2. The catalysed reaction is (R)-adrenaline + O2 + H2O = (R)-3,4-dihydroxymandelaldehyde + methylamine + H2O2. The enzyme catalyses a primary methyl amine + O2 + H2O = an aldehyde + H2O2 + NH4(+). It carries out the reaction dopamine + O2 + H2O = 3,4-dihydroxyphenylacetaldehyde + H2O2 + NH4(+). It catalyses the reaction tyramine + O2 + H2O = (4-hydroxyphenyl)acetaldehyde + H2O2 + NH4(+). The catalysed reaction is (R)-noradrenaline + O2 + H2O = (R)-3,4-dihydroxymandelaldehyde + H2O2 + NH4(+). The enzyme catalyses benzylamine + O2 + H2O = benzaldehyde + H2O2 + NH4(+). It carries out the reaction 2-phenylethylamine + O2 + H2O = 2-phenylacetaldehyde + H2O2 + NH4(+). It catalyses the reaction N-acetylputrescine + O2 + H2O = 4-acetamidobutanal + H2O2 + NH4(+). In terms of biological role, catalyzes the oxidative deamination of primary and some secondary amines such as neurotransmitters, and exogenous amines including the tertiary amine, neurotoxin 1-methyl-4-phenyl-1,2,3,6-tetrahydropyridine (MPTP), with concomitant reduction of oxygen to hydrogen peroxide and participates in the metabolism of neuroactive and vasoactive amines in the central nervous system and peripheral tissues. Preferentially degrades benzylamine and phenylethylamine. In Rattus norvegicus (Rat), this protein is Amine oxidase [flavin-containing] B.